A 180-amino-acid chain; its full sequence is Thiol:disulfide interchange protein TxlA homolog (180 aa).

The chain crosses the membrane as a helical span at residues 10 to 26; that stretch reads LLAVVAIALSAAVYLGF. The 110-residue stretch at 34 to 143 folds into the Thioredoxin domain; sequence SLEAQAQRAI…LEQNITALVA (110 aa). Cysteine 64 and cysteine 67 are joined by a disulfide.

It belongs to the thioredoxin family.

The protein resides in the cell membrane. Required for disulfide bond formation in some proteins. Acts by transferring its disulfide bond to other proteins and is reduced in the process. The protein is Thiol:disulfide interchange protein TxlA homolog (txlA) of Synechocystis sp. (strain ATCC 27184 / PCC 6803 / Kazusa).